We begin with the raw amino-acid sequence, 547 residues long: Chaperonin GroEL 2 (547 aa).

Residues 30–33 (TLGP), lysine 51, 87–91 (DGTTT), glycine 415, 479–481 (NAA), and aspartate 495 each bind ATP. The segment at 525-547 (PKEESAAPAGGGMGGMGGMGGMM) is disordered. The segment covering 533 to 547 (AGGGMGGMGGMGGMM) has biased composition (gly residues).

The protein belongs to the chaperonin (HSP60) family. In terms of assembly, forms a cylinder of 14 subunits composed of two heptameric rings stacked back-to-back. Interacts with the co-chaperonin GroES.

It localises to the cytoplasm. It catalyses the reaction ATP + H2O + a folded polypeptide = ADP + phosphate + an unfolded polypeptide.. Functionally, together with its co-chaperonin GroES, plays an essential role in assisting protein folding. The GroEL-GroES system forms a nano-cage that allows encapsulation of the non-native substrate proteins and provides a physical environment optimized to promote and accelerate protein folding. This is Chaperonin GroEL 2 from Anaeromyxobacter dehalogenans (strain 2CP-C).